A 338-amino-acid chain; its full sequence is MKVFYDKDADLSLIKGKNVTIIGYGSQGHAHALNLKDSGVNVTVGLRKSGASWNKAVNAGLQVKEVAEAVKGADVVMILLPDEQIADVYKNEVHANIKEGAALAFAHGFNVHYGAVIPRADLDVIMIAPKAPGHTVRSTYAQGGGVPHLIAVHQNKSGAARDIALSYATANGGGRAGIIETNFREETETDLFGEQAVLCGGTVELIKAGFETLVEAGYAPEMAYFECLHELKLIVDLIYEGGIANMNYSISNNAEYGEYVTGPRVVTEETKKAMKQCLKDIQTGEYAKSFLLENKAGAPTLISRRRLTAEHQIEEVGGKLRAMMPWIAKNKLVDQSKN.

The region spanning 1–181 (MKVFYDKDAD…GGGRAGIIET (181 aa)) is the KARI N-terminal Rossmann domain. NADP(+) contacts are provided by residues 24–27 (YGSQ), R47, and S52. Residue H107 is part of the active site. Position 133 (G133) interacts with NADP(+). The KARI C-terminal knotted domain occupies 182 to 327 (NFREETETDL…GKLRAMMPWI (146 aa)). Positions 190, 194, 226, and 230 each coordinate Mg(2+). S251 is a substrate binding site.

It belongs to the ketol-acid reductoisomerase family. Mg(2+) is required as a cofactor.

The enzyme catalyses (2R)-2,3-dihydroxy-3-methylbutanoate + NADP(+) = (2S)-2-acetolactate + NADPH + H(+). It catalyses the reaction (2R,3R)-2,3-dihydroxy-3-methylpentanoate + NADP(+) = (S)-2-ethyl-2-hydroxy-3-oxobutanoate + NADPH + H(+). It functions in the pathway amino-acid biosynthesis; L-isoleucine biosynthesis; L-isoleucine from 2-oxobutanoate: step 2/4. The protein operates within amino-acid biosynthesis; L-valine biosynthesis; L-valine from pyruvate: step 2/4. In terms of biological role, involved in the biosynthesis of branched-chain amino acids (BCAA). Catalyzes an alkyl-migration followed by a ketol-acid reduction of (S)-2-acetolactate (S2AL) to yield (R)-2,3-dihydroxy-isovalerate. In the isomerase reaction, S2AL is rearranged via a Mg-dependent methyl migration to produce 3-hydroxy-3-methyl-2-ketobutyrate (HMKB). In the reductase reaction, this 2-ketoacid undergoes a metal-dependent reduction by NADPH to yield (R)-2,3-dihydroxy-isovalerate. The sequence is that of Ketol-acid reductoisomerase (NADP(+)) from Cupriavidus metallidurans (strain ATCC 43123 / DSM 2839 / NBRC 102507 / CH34) (Ralstonia metallidurans).